The primary structure comprises 369 residues: Probable serine/threonine-protein kinase DDB_G0291350 (369 aa).

Residues 22–367 (YTVNRILGEG…QVIERINQII (346 aa)) enclose the Protein kinase domain. Residues 28-36 (LGEGGFSFV) and K51 each bind ATP. The active-site Proton acceptor is the D159. The segment at 169-225 (NLRRPSNNNNNNNNNNNNNNNNNNNNNNNNNNNNNNNNNNNNNNNNNNNNNNNSEDS) is disordered. Residues 175 to 221 (NNNNNNNNNNNNNNNNNNNNNNNNNNNNNNNNNNNNNNNNNNNNNNN) are compositionally biased toward low complexity.

Belongs to the protein kinase superfamily. Ser/Thr protein kinase family.

It carries out the reaction L-seryl-[protein] + ATP = O-phospho-L-seryl-[protein] + ADP + H(+). It catalyses the reaction L-threonyl-[protein] + ATP = O-phospho-L-threonyl-[protein] + ADP + H(+). This chain is Probable serine/threonine-protein kinase DDB_G0291350, found in Dictyostelium discoideum (Social amoeba).